The following is a 207-amino-acid chain: Ribosomal RNA large subunit methyltransferase E (207 aa).

S-adenosyl-L-methionine-binding residues include glycine 56, tryptophan 58, aspartate 76, aspartate 94, and aspartate 116. The Proton acceptor role is filled by lysine 156.

The protein belongs to the class I-like SAM-binding methyltransferase superfamily. RNA methyltransferase RlmE family.

It is found in the cytoplasm. The enzyme catalyses uridine(2552) in 23S rRNA + S-adenosyl-L-methionine = 2'-O-methyluridine(2552) in 23S rRNA + S-adenosyl-L-homocysteine + H(+). Specifically methylates the uridine in position 2552 of 23S rRNA at the 2'-O position of the ribose in the fully assembled 50S ribosomal subunit. This chain is Ribosomal RNA large subunit methyltransferase E, found in Desulfatibacillum aliphaticivorans.